Here is a 105-residue protein sequence, read N- to C-terminus: Large ribosomal subunit protein P1 (105 aa).

Methionine 1 carries the blocked amino end (Met) modification. Over residues 65–76 (VAAPAGQQTQQA) the composition is skewed to low complexity. Positions 65–105 (VAAPAGQQTQQAAEKKEEKKEEEKKGPSEEEIGGGLSSLFG) are disordered. The span at 77–92 (AEKKEEKKEEEKKGPS) shows a compositional bias: basic and acidic residues.

Belongs to the eukaryotic ribosomal protein P1/P2 family. As to quaternary structure, part of the 50S ribosomal subunit. Homodimer, it forms part of the ribosomal stalk which helps the ribosome interact with GTP-bound translation factors. Forms a heptameric uL10/P0(P1)2(P1)2(P1)2 complex, where uL10/P0 forms an elongated spine to which the P1 dimers bind in a sequential fashion.

Its function is as follows. Forms part of the ribosomal stalk, playing a central role in the interaction of the ribosome with GTP-bound translation factors. The sequence is that of Large ribosomal subunit protein P1 from Sulfolobus acidocaldarius (strain ATCC 33909 / DSM 639 / JCM 8929 / NBRC 15157 / NCIMB 11770).